The following is a 391-amino-acid chain: Formate-dependent phosphoribosylglycinamide formyltransferase (391 aa).

N(1)-(5-phospho-beta-D-ribosyl)glycinamide-binding positions include 18–19 and Glu-78; that span reads EL. ATP contacts are provided by residues Arg-110, Lys-151, 156–161, 191–194, and Glu-199; these read SSGKGQ and EEFI. The 191-residue stretch at 115-305 folds into the ATP-grasp domain; it reads ELAHEELGIR…EFELHLRAIL (191 aa). Glu-264 and Glu-276 together coordinate Mg(2+). Residues Asp-283, Lys-353, and 360–361 each bind N(1)-(5-phospho-beta-D-ribosyl)glycinamide; that span reads RR.

This sequence belongs to the PurK/PurT family. As to quaternary structure, homodimer.

The enzyme catalyses N(1)-(5-phospho-beta-D-ribosyl)glycinamide + formate + ATP = N(2)-formyl-N(1)-(5-phospho-beta-D-ribosyl)glycinamide + ADP + phosphate + H(+). Its pathway is purine metabolism; IMP biosynthesis via de novo pathway; N(2)-formyl-N(1)-(5-phospho-D-ribosyl)glycinamide from N(1)-(5-phospho-D-ribosyl)glycinamide (formate route): step 1/1. Functionally, involved in the de novo purine biosynthesis. Catalyzes the transfer of formate to 5-phospho-ribosyl-glycinamide (GAR), producing 5-phospho-ribosyl-N-formylglycinamide (FGAR). Formate is provided by PurU via hydrolysis of 10-formyl-tetrahydrofolate. This chain is Formate-dependent phosphoribosylglycinamide formyltransferase, found in Trichormus variabilis (strain ATCC 29413 / PCC 7937) (Anabaena variabilis).